The primary structure comprises 145 residues: VHLTAEDRKEIAAILGKVNVDSLGGQCLARLIVVNPWSRRYFHDFGDLSSCDAICRNPKVLAHGAKVMRSIVEATKHLDNLREYYADLSVTHSLKFYVDPENFKLFSGIVIVCLALTLQTDFSCHKQLAFEKLMKGVSHALGHGY.

The 144-residue stretch at 2–145 (HLTAEDRKEI…GVSHALGHGY (144 aa)) folds into the Globin domain. The heme b site is built by H63 and H92.

It belongs to the globin family. In terms of assembly, minor hemoglobin is a tetramer of two alpha-2 chains and two beta-2 chains. As to expression, red blood cells.

In terms of biological role, involved in oxygen transport from the lung to the various peripheral tissues. The polypeptide is Hemoglobin subunit beta-2 (HBB2) (Triturus cristatus (Great crested newt)).